The primary structure comprises 254 residues: 5-oxoprolinase subunit A (254 aa).

This sequence belongs to the LamB/PxpA family. Forms a complex composed of PxpA, PxpB and PxpC.

It carries out the reaction 5-oxo-L-proline + ATP + 2 H2O = L-glutamate + ADP + phosphate + H(+). Its function is as follows. Catalyzes the cleavage of 5-oxoproline to form L-glutamate coupled to the hydrolysis of ATP to ADP and inorganic phosphate. The protein is 5-oxoprolinase subunit A of Burkholderia mallei (strain NCTC 10247).